The primary structure comprises 288 residues: Light-independent protochlorophyllide reductase iron-sulfur ATP-binding protein (288 aa).

ATP-binding positions include 10 to 15 (GIGKST) and Lys-39. Ser-14 is a Mg(2+) binding site. Residues Cys-95 and Cys-129 each contribute to the [4Fe-4S] cluster site. 180–181 (NR) lines the ATP pocket.

The protein belongs to the NifH/BchL/ChlL family. In terms of assembly, homodimer. Protochlorophyllide reductase is composed of three subunits; ChlL, ChlN and ChlB. [4Fe-4S] cluster is required as a cofactor.

Its subcellular location is the plastid. It is found in the chloroplast. It carries out the reaction chlorophyllide a + oxidized 2[4Fe-4S]-[ferredoxin] + 2 ADP + 2 phosphate = protochlorophyllide a + reduced 2[4Fe-4S]-[ferredoxin] + 2 ATP + 2 H2O. The protein operates within porphyrin-containing compound metabolism; chlorophyll biosynthesis (light-independent). Functionally, component of the dark-operative protochlorophyllide reductase (DPOR) that uses Mg-ATP and reduced ferredoxin to reduce ring D of protochlorophyllide (Pchlide) to form chlorophyllide a (Chlide). This reaction is light-independent. The L component serves as a unique electron donor to the NB-component of the complex, and binds Mg-ATP. The sequence is that of Light-independent protochlorophyllide reductase iron-sulfur ATP-binding protein from Chara vulgaris (Common stonewort).